We begin with the raw amino-acid sequence, 556 residues long: Formate--tetrahydrofolate ligase (556 aa).

65–72 (TPAGEGKT) is an ATP binding site.

This sequence belongs to the formate--tetrahydrofolate ligase family.

The enzyme catalyses (6S)-5,6,7,8-tetrahydrofolate + formate + ATP = (6R)-10-formyltetrahydrofolate + ADP + phosphate. It participates in one-carbon metabolism; tetrahydrofolate interconversion. In Proteus mirabilis (strain HI4320), this protein is Formate--tetrahydrofolate ligase.